The sequence spans 149 residues: MQVILTQDVEKVGRRGDIVDVSRGYVRNYLVPRGLAEVATPAKLEEARRRMEEAAERERRLAERAEEIAETLNKSVITIEARTGEDERLFGSVTAANIAEAIEKARGIHLDRRKIRLEEPIRSLGTHQVPVQVHGEIEASVKVIVVPKL.

Belongs to the bacterial ribosomal protein bL9 family.

Functionally, binds to the 23S rRNA. This chain is Large ribosomal subunit protein bL9, found in Rubrobacter xylanophilus (strain DSM 9941 / JCM 11954 / NBRC 16129 / PRD-1).